The chain runs to 419 residues: L-2-hydroxyglutarate dehydrogenase, mitochondrial (419 aa).

A mitochondrion-targeting transit peptide spans 1 to 51 (MVPALRYLVGACGRARGGFAGDFPGASGLASGRPRPLCGGSRSASTSSFDI). Lys104 and Lys173 each carry N6-acetyllysine.

This sequence belongs to the L2HGDH family. Requires FAD as cofactor.

It localises to the mitochondrion. It carries out the reaction (S)-2-hydroxyglutarate + A = 2-oxoglutarate + AH2. The chain is L-2-hydroxyglutarate dehydrogenase, mitochondrial (L2HGDH) from Pongo abelii (Sumatran orangutan).